Reading from the N-terminus, the 244-residue chain is Proteasome subunit alpha type-5 (244 aa).

The protein belongs to the peptidase T1A family. In terms of assembly, the 26S proteasome consists of a 20S proteasome core and two 19S regulatory subunits. The 20S proteasome core is composed of 28 subunits that are arranged in four stacked rings, resulting in a barrel-shaped structure. The two end rings are each formed by seven alpha subunits, and the two central rings are each formed by seven beta subunits. The catalytic chamber with the active sites is on the inside of the barrel.

The protein localises to the cytoplasm. It is found in the nucleus. Its function is as follows. The proteasome is a multicatalytic proteinase complex which is characterized by its ability to cleave peptides with Arg, Phe, Tyr, Leu, and Glu adjacent to the leaving group at neutral or slightly basic pH. The proteasome has an ATP-dependent proteolytic activity. The polypeptide is Proteasome subunit alpha type-5 (Prosalpha5) (Drosophila melanogaster (Fruit fly)).